The chain runs to 196 residues: ATP-dependent Clp protease proteolytic subunit (196 aa).

The Nucleophile role is filled by S98. The active site involves H123.

It belongs to the peptidase S14 family. As to quaternary structure, fourteen ClpP subunits assemble into 2 heptameric rings which stack back to back to give a disk-like structure with a central cavity, resembling the structure of eukaryotic proteasomes.

It is found in the cytoplasm. It catalyses the reaction Hydrolysis of proteins to small peptides in the presence of ATP and magnesium. alpha-casein is the usual test substrate. In the absence of ATP, only oligopeptides shorter than five residues are hydrolyzed (such as succinyl-Leu-Tyr-|-NHMec, and Leu-Tyr-Leu-|-Tyr-Trp, in which cleavage of the -Tyr-|-Leu- and -Tyr-|-Trp bonds also occurs).. Its function is as follows. Cleaves peptides in various proteins in a process that requires ATP hydrolysis. Has a chymotrypsin-like activity. Plays a major role in the degradation of misfolded proteins. This is ATP-dependent Clp protease proteolytic subunit from Actinobacillus pleuropneumoniae serotype 7 (strain AP76).